The primary structure comprises 371 residues: MKVKQQLKQLKPYQPGKPIEEVKREYQLETVIKLASNENPYGCSPLVRQAVMNELDDLALYPDGYSRTLREALAAHIGISEKQLIFGNGSDEVVQIICRAFLQKGTNTVMATPTFPQYRHNAIIEGAEVREIPLQDGHHHLEAMLEAIDDHTRVVWICSPNNPTGTYVNDASLRAFLNKVPQHVLVVVDEAYYEYVQAEDYPNTVSLLQQYENMMILRTFSKAYGLAALRIGYGIAHEHLLQAIEPAREPFNTSRLAQAAAFAALKDQTFIQQCAQKNKQGLDQFYAFCDEYGLRYYKSEGNFILIDFGFSGDEVFTYLLQRGIIVRSGCALGFPTAVRITVGSAEQNETIIRALTNMLKERRDSFCKETF.

Lys-222 is modified (N6-(pyridoxal phosphate)lysine).

This sequence belongs to the class-II pyridoxal-phosphate-dependent aminotransferase family. Histidinol-phosphate aminotransferase subfamily. Homodimer. Pyridoxal 5'-phosphate serves as cofactor.

It carries out the reaction L-histidinol phosphate + 2-oxoglutarate = 3-(imidazol-4-yl)-2-oxopropyl phosphate + L-glutamate. It participates in amino-acid biosynthesis; L-histidine biosynthesis; L-histidine from 5-phospho-alpha-D-ribose 1-diphosphate: step 7/9. The chain is Histidinol-phosphate aminotransferase from Anoxybacillus flavithermus (strain DSM 21510 / WK1).